The sequence spans 184 residues: uncharacterized protein (184 aa).

Residues 146 to 177 (HPKTSLAQQPNAKATQPPLSKETLNTAKETDP) form a disordered region. Over residues 150-172 (SLAQQPNAKATQPPLSKETLNTA) the composition is skewed to polar residues.

This is an uncharacterized protein from Picosynechococcus sp. (strain ATCC 27264 / PCC 7002 / PR-6) (Agmenellum quadruplicatum).